Reading from the N-terminus, the 318-residue chain is Thymidylate synthase (318 aa).

DUMP contacts are provided by residues arginine 25 and 180-181; that span reads RR. Cysteine 200 (nucleophile) is an active-site residue. DUMP-binding positions include 220-223, asparagine 231, and 261-263; these read RSGD and HIY. Residue aspartate 223 coordinates (6R)-5,10-methylene-5,6,7,8-tetrahydrofolate. Position 317 (alanine 317) interacts with (6R)-5,10-methylene-5,6,7,8-tetrahydrofolate.

This sequence belongs to the thymidylate synthase family. Bacterial-type ThyA subfamily. In terms of assembly, homodimer.

The protein localises to the cytoplasm. The enzyme catalyses dUMP + (6R)-5,10-methylene-5,6,7,8-tetrahydrofolate = 7,8-dihydrofolate + dTMP. It participates in pyrimidine metabolism; dTTP biosynthesis. Functionally, catalyzes the reductive methylation of 2'-deoxyuridine-5'-monophosphate (dUMP) to 2'-deoxythymidine-5'-monophosphate (dTMP) while utilizing 5,10-methylenetetrahydrofolate (mTHF) as the methyl donor and reductant in the reaction, yielding dihydrofolate (DHF) as a by-product. This enzymatic reaction provides an intracellular de novo source of dTMP, an essential precursor for DNA biosynthesis. This is Thymidylate synthase from Lactobacillus acidophilus (strain ATCC 700396 / NCK56 / N2 / NCFM).